Consider the following 261-residue polypeptide: Acyl-[acyl-carrier-protein]--UDP-N-acetylglucosamine O-acyltransferase (261 aa).

The protein belongs to the transferase hexapeptide repeat family. LpxA subfamily. As to quaternary structure, homotrimer.

It localises to the cytoplasm. The enzyme catalyses a (3R)-hydroxyacyl-[ACP] + UDP-N-acetyl-alpha-D-glucosamine = a UDP-3-O-[(3R)-3-hydroxyacyl]-N-acetyl-alpha-D-glucosamine + holo-[ACP]. It participates in glycolipid biosynthesis; lipid IV(A) biosynthesis; lipid IV(A) from (3R)-3-hydroxytetradecanoyl-[acyl-carrier-protein] and UDP-N-acetyl-alpha-D-glucosamine: step 1/6. Its function is as follows. Involved in the biosynthesis of lipid A, a phosphorylated glycolipid that anchors the lipopolysaccharide to the outer membrane of the cell. The sequence is that of Acyl-[acyl-carrier-protein]--UDP-N-acetylglucosamine O-acyltransferase from Aquifex aeolicus (strain VF5).